We begin with the raw amino-acid sequence, 361 residues long: Beta-hexosaminidase (361 aa).

Substrate is bound by residues Asp69, Arg77, Arg144, and 174–175 (KH). His187 acts as the Proton donor/acceptor in catalysis. The Nucleophile role is filled by Asp258.

It belongs to the glycosyl hydrolase 3 family. NagZ subfamily.

It is found in the cytoplasm. It catalyses the reaction Hydrolysis of terminal non-reducing N-acetyl-D-hexosamine residues in N-acetyl-beta-D-hexosaminides.. It participates in cell wall biogenesis; peptidoglycan recycling. In terms of biological role, plays a role in peptidoglycan recycling by cleaving the terminal beta-1,4-linked N-acetylglucosamine (GlcNAc) from peptide-linked peptidoglycan fragments, giving rise to free GlcNAc, anhydro-N-acetylmuramic acid and anhydro-N-acetylmuramic acid-linked peptides. This chain is Beta-hexosaminidase, found in Neisseria meningitidis serogroup B (strain ATCC BAA-335 / MC58).